Consider the following 422-residue polypeptide: Replication factor C large subunit (422 aa).

An ATP-binding site is contributed by 63 to 70 (GPPGIGKT).

The protein belongs to the activator 1 small subunits family. RfcL subfamily. As to quaternary structure, heteromultimer composed of small subunits (RfcS) and large subunits (RfcL).

Functionally, part of the RFC clamp loader complex which loads the PCNA sliding clamp onto DNA. This Pyrobaculum neutrophilum (strain DSM 2338 / JCM 9278 / NBRC 100436 / V24Sta) (Thermoproteus neutrophilus) protein is Replication factor C large subunit.